A 470-amino-acid polypeptide reads, in one-letter code: Glutamate--tRNA ligase 1 (470 aa).

The short motif at 15-25 is the 'HIGH' region element; sequence PSPTGTMHIGT. Positions 241-245 match the 'KMSKS' region motif; sequence KLSKR. Lysine 244 serves as a coordination point for ATP.

Belongs to the class-I aminoacyl-tRNA synthetase family. Glutamate--tRNA ligase type 1 subfamily. In terms of assembly, monomer.

It is found in the cytoplasm. The enzyme catalyses tRNA(Glu) + L-glutamate + ATP = L-glutamyl-tRNA(Glu) + AMP + diphosphate. Its function is as follows. Catalyzes the attachment of glutamate to tRNA(Glu) in a two-step reaction: glutamate is first activated by ATP to form Glu-AMP and then transferred to the acceptor end of tRNA(Glu). The chain is Glutamate--tRNA ligase 1 from Jannaschia sp. (strain CCS1).